The chain runs to 471 residues: uncharacterized protein (471 aa).

A run of 4 helical transmembrane segments spans residues 10–30 (ALWL…LFVI), 46–66 (IDDR…WFAI), 87–107 (TLII…LYFS), and 280–300 (IVVG…LYFA).

It belongs to the bacterial sugar transferase family.

It is found in the cell membrane. It functions in the pathway glycan metabolism; exopolysaccharide biosynthesis. May function as a sugar transferase. This is an uncharacterized protein from Haemophilus influenzae (strain ATCC 51907 / DSM 11121 / KW20 / Rd).